The following is a 177-amino-acid chain: Large ribosomal subunit protein uL6 (177 aa).

This sequence belongs to the universal ribosomal protein uL6 family. In terms of assembly, part of the 50S ribosomal subunit.

This protein binds to the 23S rRNA, and is important in its secondary structure. It is located near the subunit interface in the base of the L7/L12 stalk, and near the tRNA binding site of the peptidyltransferase center. In Erythrobacter litoralis (strain HTCC2594), this protein is Large ribosomal subunit protein uL6.